A 207-amino-acid chain; its full sequence is Small ribosomal subunit protein uS4 (207 aa).

The tract at residues 30–54 (DKCKLDSKPGQHGRTSGARTSDYGN) is disordered. The segment covering 42–53 (GRTSGARTSDYG) has biased composition (polar residues). The S4 RNA-binding domain maps to 97-160 (SRLDNVVYRM…KKQVRIAEAL (64 aa)).

It belongs to the universal ribosomal protein uS4 family. In terms of assembly, part of the 30S ribosomal subunit. Contacts protein S5. The interaction surface between S4 and S5 is involved in control of translational fidelity.

Its function is as follows. One of the primary rRNA binding proteins, it binds directly to 16S rRNA where it nucleates assembly of the body of the 30S subunit. Functionally, with S5 and S12 plays an important role in translational accuracy. The protein is Small ribosomal subunit protein uS4 of Cupriavidus taiwanensis (strain DSM 17343 / BCRC 17206 / CCUG 44338 / CIP 107171 / LMG 19424 / R1) (Ralstonia taiwanensis (strain LMG 19424)).